The primary structure comprises 401 residues: L-threonine ammonia-lyase (401 aa).

The residue at position 51 (lysine 51) is an N6-(pyridoxal phosphate)lysine. Pyridoxal 5'-phosphate is bound by residues asparagine 78, 178–181 (GGGL), and serine 301. The ACT domain maps to 326-401 (FIETFVMDRP…AKGYEVRIVG (76 aa)).

Belongs to the serine/threonine dehydratase family. As to quaternary structure, homotetramer. Pyridoxal 5'-phosphate is required as a cofactor.

The catalysed reaction is L-threonine = 2-oxobutanoate + NH4(+). The enzyme catalyses L-serine = pyruvate + NH4(+). It participates in amino-acid biosynthesis; L-isoleucine biosynthesis; 2-oxobutanoate from L-threonine: step 1/1. Activity is insensitive to allosteric regulators L-valine and L-isoleucine at low concentrations, while these L-amino acids are inhibitors at high concentrations. Is insensitive to ammonium chloride and AMP. Inhibited in the presence of aminoxyacetic acid (AOAA), an inhibitor of pyridoxal phosphate-dependent enzymes. Catalyzes the conversion of L-threonine to 2-oxobutanoate and ammonia. Can also use L-serine, but the catalytic efficiency toward L-threonine is about sixfold higher than that toward L-serine. Also shows weak activity toward L-allo-threonine, but cannot use the corresponding D-amino acids. Does not exhibit racemase activity toward various amino acids, including serine. Physiologically, is likely involved in the threonine-dependent pathway of isoleucine biosynthesis. This is L-threonine ammonia-lyase from Thermotoga maritima (strain ATCC 43589 / DSM 3109 / JCM 10099 / NBRC 100826 / MSB8).